A 272-amino-acid polypeptide reads, in one-letter code: Shikimate dehydrogenase (NADP(+)) (272 aa).

Shikimate contacts are provided by residues 20 to 22 (TMS) and threonine 67. The active-site Proton acceptor is lysine 71. Glutamate 83 contacts NADP(+). 2 residues coordinate shikimate: asparagine 92 and aspartate 107. Residues 129–133 (GAGGA), 153–158 (NRTKSK), and leucine 216 each bind NADP(+). Tyrosine 218 serves as a coordination point for shikimate. An NADP(+)-binding site is contributed by glycine 239.

The protein belongs to the shikimate dehydrogenase family. As to quaternary structure, homodimer.

It catalyses the reaction shikimate + NADP(+) = 3-dehydroshikimate + NADPH + H(+). Its pathway is metabolic intermediate biosynthesis; chorismate biosynthesis; chorismate from D-erythrose 4-phosphate and phosphoenolpyruvate: step 4/7. Functionally, involved in the biosynthesis of the chorismate, which leads to the biosynthesis of aromatic amino acids. Catalyzes the reversible NADPH linked reduction of 3-dehydroshikimate (DHSA) to yield shikimate (SA). The sequence is that of Shikimate dehydrogenase (NADP(+)) from Maridesulfovibrio salexigens (strain ATCC 14822 / DSM 2638 / NCIMB 8403 / VKM B-1763) (Desulfovibrio salexigens).